The primary structure comprises 187 residues: Large ribosomal subunit protein uL13 (187 aa).

The protein belongs to the universal ribosomal protein uL13 family. Part of the 50S ribosomal subunit.

This protein is one of the early assembly proteins of the 50S ribosomal subunit, although it is not seen to bind rRNA by itself. It is important during the early stages of 50S assembly. In Pyrobaculum aerophilum (strain ATCC 51768 / DSM 7523 / JCM 9630 / CIP 104966 / NBRC 100827 / IM2), this protein is Large ribosomal subunit protein uL13.